Reading from the N-terminus, the 177-residue chain is Large ribosomal subunit protein uL6 (177 aa).

The protein belongs to the universal ribosomal protein uL6 family. In terms of assembly, part of the 50S ribosomal subunit.

This protein binds to the 23S rRNA, and is important in its secondary structure. It is located near the subunit interface in the base of the L7/L12 stalk, and near the tRNA binding site of the peptidyltransferase center. This Rickettsia felis (strain ATCC VR-1525 / URRWXCal2) (Rickettsia azadi) protein is Large ribosomal subunit protein uL6.